The chain runs to 232 residues: DASH complex subunit DUO1 (232 aa).

2 disordered regions span residues methionine 1–arginine 44 and glutamate 133–lysine 232. A coiled-coil region spans residues glutamate 128–alanine 171. Over residues glutamate 133–arginine 165 the composition is skewed to basic and acidic residues. 2 stretches are compositionally biased toward low complexity: residues alanine 167–glycine 183 and glycine 191–glycine 213.

The protein belongs to the DASH complex DUO1 family. Component of the DASH complex consisting of ASK1, DAD1, DAD2, DAD3, DAD4, DAM1, DUO1, HSK3, SPC19 and SPC34, with a stoichiometry of one copy of each subunit per complex. Multiple DASH complexes oligomerize to form a ring that encircles spindle microtubules and organizes the rod-like NDC80 complexes of the outer kinetochore. DASH complex oligomerization strengthens microtubule attachments. On cytoplasmic microtubules, DASH complexes appear to form patches instead of rings.

The protein resides in the nucleus. It localises to the cytoplasm. The protein localises to the cytoskeleton. It is found in the spindle pole. Its subcellular location is the chromosome. The protein resides in the centromere. It localises to the kinetochore. In terms of biological role, component of the DASH complex that connects microtubules with kinetochores and couples microtubule depolymerisation to chromosome movement; it is involved in retrieving kinetochores to the spindle poles before their re-orientation on the spindle in early mitosis and allows microtubule depolymerization to pull chromosomes apart and resist detachment during anaphase. Kinetochores, consisting of a centromere-associated inner segment and a microtubule-contacting outer segment, play a crucial role in chromosome segregation by mediating the physical connection between centromeric DNA and microtubules. Kinetochores also serve as an input point for the spindle assembly checkpoint, which delays anaphase until all chromosomes have bioriented on the mitotic spindle. This chain is DASH complex subunit DUO1, found in Chaetomium thermophilum (strain DSM 1495 / CBS 144.50 / IMI 039719) (Thermochaetoides thermophila).